A 481-amino-acid polypeptide reads, in one-letter code: Cysteine--tRNA ligase (481 aa).

Cys27 is a Zn(2+) binding site. The short motif at Pro29 to Asn39 is the 'HIGH' region element. 3 residues coordinate Zn(2+): Cys222, His247, and Glu251. Residues Lys279–Ser283 carry the 'KMSKS' region motif. Lys282 serves as a coordination point for ATP.

Belongs to the class-I aminoacyl-tRNA synthetase family. In terms of assembly, monomer. Zn(2+) is required as a cofactor.

The protein localises to the cytoplasm. It catalyses the reaction tRNA(Cys) + L-cysteine + ATP = L-cysteinyl-tRNA(Cys) + AMP + diphosphate. This Borrelia turicatae (strain 91E135) protein is Cysteine--tRNA ligase.